Reading from the N-terminus, the 374-residue chain is Chaperone protein DnaJ (374 aa).

The J domain maps to 5–70 (DYYEVLGVNR…RKRASYDQFG (66 aa)). The CR-type zinc-finger motif lies at 133-210 (GLSRTIKVPT…CHGQGRQQQT (78 aa)). Zn(2+)-binding residues include C146, C149, C162, C165, C184, C187, C198, and C201. CXXCXGXG motif repeat units lie at residues 146–153 (CKTCNGSG), 162–169 (CPRCNGSG), 184–191 (CSVCRGRG), and 198–205 (CTDCHGQG).

It belongs to the DnaJ family. As to quaternary structure, homodimer. Zn(2+) serves as cofactor.

It localises to the cytoplasm. Participates actively in the response to hyperosmotic and heat shock by preventing the aggregation of stress-denatured proteins and by disaggregating proteins, also in an autonomous, DnaK-independent fashion. Unfolded proteins bind initially to DnaJ; upon interaction with the DnaJ-bound protein, DnaK hydrolyzes its bound ATP, resulting in the formation of a stable complex. GrpE releases ADP from DnaK; ATP binding to DnaK triggers the release of the substrate protein, thus completing the reaction cycle. Several rounds of ATP-dependent interactions between DnaJ, DnaK and GrpE are required for fully efficient folding. Also involved, together with DnaK and GrpE, in the DNA replication of plasmids through activation of initiation proteins. The protein is Chaperone protein DnaJ of Coxiella burnetii (strain CbuG_Q212) (Coxiella burnetii (strain Q212)).